The primary structure comprises 92 residues: Transcription factor S4 (92 aa).

Residues 1 to 31 (MRFCPKCGSFLKVKGNKMVCSKCGYSDHDVE) form a ZR-N region. Zn(2+) contacts are provided by C4, C7, C20, and C23. The interval 32-56 (KVILKENVAHENDKTIIADGETIEG) is flexible linker. Positions 55 to 92 (EGRVAISLCPRCGSVRAILLNKKKRLYRCMTCNFVYNI) are ZR-C. Zn(2+)-binding residues include C63 and C66. Residues K76, K77, and K78 contribute to the active site. Zn(2+)-binding residues include C83 and C86.

Belongs to the archaeal RpoM/eukaryotic RPA12/RPB9/RPC11 RNA polymerase family. In terms of assembly, interacts with RNA polymerase. It depends on Zn(2+) as a cofactor.

A potent inhibitor of RNA polymerase (RNAP) probably involved in viral defense. Destabilizes the transcription pre-initiation complex of TBP, TFB, DNA and RNAP, inhibits abortive transcription initiation, productive initiation and transcription elongation. Increases the RNAP KM for NTPs about 50-fold. Overexpression of TFS1-tip4 (TFS1 with the active tip of this protein, phenocopies this protein) in S.acidocaldarius MW001 leads to severe growth inhibition. When bound to RNAP induces conformational changes that widen the DNA-binding channel, probably destabilizing the interaction of DNA with RNAP. The sequence is that of Transcription factor S4 from Saccharolobus solfataricus (strain ATCC 35092 / DSM 1617 / JCM 11322 / P2) (Sulfolobus solfataricus).